The chain runs to 455 residues: Gamma-aminobutyric acid receptor subunit alpha-1 (455 aa).

The N-terminal stretch at 1–27 is a signal peptide; that stretch reads MKKSRGLSDYLWAWTLILSTLSGRSYG. Over 28–252 the chain is Extracellular; that stretch reads QPSQDELKDN…FHLKRKIGYF (225 aa). N-linked (GlcNAc...) asparagine glycosylation occurs at Asn-37. Arg-93 is a binding site for 4-aminobutanoate. N-linked (GlcNAc...) asparagine glycosylation is present at Asn-137. Thr-156 contributes to the 4-aminobutanoate binding site. Cys-165 and Cys-179 are oxidised to a cystine. Residues 253–273 form a helical membrane-spanning segment; the sequence is VIQTYLPCIMTVILSQVSFWL. Residues 274–278 lie on the Cytoplasmic side of the membrane; that stretch reads NRESV. The helical transmembrane segment at 279 to 300 threads the bilayer; the sequence is PARTVFGVTTVLTMTTLSISAR. Topologically, residues 301–310 are extracellular; that stretch reads NSLPKVAYAT. Residues 311-332 traverse the membrane as a helical segment; sequence AMDWFIAVCYAFVFSALIEFAT. The Cytoplasmic portion of the chain corresponds to 333-420; that stretch reads VNYFTKRGYA…TFNSVSKIDR (88 aa). The chain crosses the membrane as a helical span at residues 421-440; the sequence is LSRIAFPLLFGIFNLVYWAT. Residues 441-455 lie on the Extracellular side of the membrane; sequence YLNREPQLKAPTPHQ.

Belongs to the ligand-gated ion channel (TC 1.A.9) family. Gamma-aminobutyric acid receptor (TC 1.A.9.5) subfamily. GABRA1 sub-subfamily. Heteropentamer, formed by a combination of alpha (GABRA1-6), beta (GABRB1-3), gamma (GABRG1-3), delta (GABRD), epsilon (GABRE), rho (GABRR1-3), pi (GABRP) and theta (GABRQ) subunits, each subunit exhibiting distinct physiological and pharmacological properties. Interacts with UBQLN1. Interacts with TRAK1. Interacts with KIF21B. Identified in a complex of 720 kDa composed of LHFPL4, NLGN2, GABRA1, GABRB2, GABRG2 and GABRB3. Interacts with LHFPL4. Interacts with NLGN2. Interacts with SHISA7; interaction leads to the regulation of GABA(A) receptor trafficking, channel deactivation kinetics and pharmacology. Post-translationally, glycosylated. In terms of tissue distribution, expressed in the cerebellum.

It is found in the postsynaptic cell membrane. Its subcellular location is the cell membrane. It localises to the cytoplasmic vesicle membrane. It catalyses the reaction chloride(in) = chloride(out). Allosterically activated by benzodiazepines, the neuroanesthetic alphaxalone and pentobarbital. Inhibited by the antagonist bicuculline. Potentiated by histamine. Alpha subunit of the heteropentameric ligand-gated chloride channel gated by Gamma-aminobutyric acid (GABA), a major inhibitory neurotransmitter in the brain. GABA-gated chloride channels, also named GABA(A) receptors (GABAAR), consist of five subunits arranged around a central pore and contain GABA active binding site(s) located at the alpha and beta subunit interface(s). When activated by GABA, GABAARs selectively allow the flow of chloride anions across the cell membrane down their electrochemical gradient. Alpha-1/GABRA1-containing GABAARs are largely synaptic. Chloride influx into the postsynaptic neuron following GABAAR opening decreases the neuron ability to generate a new action potential, thereby reducing nerve transmission. GABAARs containing alpha-1 and beta-2 or -3 subunits exhibit synaptogenic activity; the gamma-2 subunit being necessary but not sufficient to induce rapid synaptic contacts formation. GABAARs function also as histamine receptor where histamine binds at the interface of two neighboring beta subunits and potentiates GABA response. GABAARs containing alpha, beta and epsilon subunits also permit spontaneous chloride channel activity while preserving the structural information required for GABA-gated openings. Alpha-1-mediated plasticity in the orbitofrontal cortex regulates context-dependent action selection. Together with rho subunits, may also control neuronal and glial GABAergic transmission in the cerebellum. The protein is Gamma-aminobutyric acid receptor subunit alpha-1 of Mus musculus (Mouse).